The primary structure comprises 159 residues: Transmembrane protein 89 (159 aa).

An N-terminal signal peptide occupies residues 1 to 24 (MLHVLASLPLLLLLVTSASTHAWS). Over 25–63 (RPLWYQVGLDLQPWGCQPKSVEGCRGGLSCPGYWLGPGA) the chain is Extracellular. A helical membrane pass occupies residues 64–86 (SRIYPVAAVMITTTMLMICRKIL). Residues 87-159 (QGRRRSQATK…QIKGTSTQSG (73 aa)) are Cytoplasmic-facing. The tract at residues 91–110 (RSQATKGEHPQVTTEPCGPW) is disordered.

It localises to the membrane. The sequence is that of Transmembrane protein 89 (TMEM89) from Homo sapiens (Human).